The primary structure comprises 519 residues: T-complex protein 1 subunit gamma (519 aa).

This sequence belongs to the TCP-1 chaperonin family. Component of the T-complex protein 1 (TCP1) complex.

The protein localises to the cytoplasm. Molecular chaperone; assists the folding of proteins upon ATP hydrolysis. The sequence is that of T-complex protein 1 subunit gamma (CCT3) from Encephalitozoon cuniculi (strain GB-M1) (Microsporidian parasite).